The chain runs to 704 residues: DNA ligase (704 aa).

NAD(+) is bound by residues 44–48, 93–94, and Glu-125; these read DYEYD and SI. Lys-127 serves as the catalytic N6-AMP-lysine intermediate. NAD(+) contacts are provided by Arg-148, Glu-184, Lys-300, and Lys-324. 4 residues coordinate Zn(2+): Cys-418, Cys-421, Cys-436, and Cys-442. Positions 625–704 constitute a BRCT domain; that stretch reads IISSNISGKI…DEWEHLINEK (80 aa).

The protein belongs to the NAD-dependent DNA ligase family. LigA subfamily. It depends on Mg(2+) as a cofactor. Requires Mn(2+) as cofactor.

The catalysed reaction is NAD(+) + (deoxyribonucleotide)n-3'-hydroxyl + 5'-phospho-(deoxyribonucleotide)m = (deoxyribonucleotide)n+m + AMP + beta-nicotinamide D-nucleotide.. Its function is as follows. DNA ligase that catalyzes the formation of phosphodiester linkages between 5'-phosphoryl and 3'-hydroxyl groups in double-stranded DNA using NAD as a coenzyme and as the energy source for the reaction. It is essential for DNA replication and repair of damaged DNA. In Pelobacter propionicus (strain DSM 2379 / NBRC 103807 / OttBd1), this protein is DNA ligase.